Consider the following 530-residue polypeptide: Cation transporter HKT2;2 (530 aa).

At 1–40 the chain is on the cytoplasmic side; it reads MTSIYQEFIHTKCQSFRSIGRYVLHSIVLIYRFVSLHVHP. Transmembrane regions (helical) follow at residues 41–61 and 102–122; these read FWIQ…LLMF and IVVL…FLGL. Over 123-186 the chain is Cytoplasmic; the sequence is MLRLKHKHNP…DLKRSKRLRW (64 aa). Helical transmembrane passes span 187-207 and 260-280; these read FLGF…FLLV and GLLL…PLFL. Residues 281–317 are Cytoplasmic-facing; that stretch reads RILIWFLGKVTKLKDLKLMIKNSDELQYDYLLPKLPT. Transmembrane regions (helical) follow at residues 318–338 and 372–392; these read AFLA…FGSV and IDCS…MYLP. The Cytoplasmic portion of the chain corresponds to 393 to 420; that stretch reads PSTTFALSNGDEKTANKKAKRKLGLVVR. A run of 2 helical transmembrane segments spans residues 421-441 and 494-514; these read NLAF…LITE and SLSG…MLYG. Residues 515-530 lie on the Cytoplasmic side of the membrane; the sequence is RLKAFTKGTGEYWRLW.

It belongs to the TrkH potassium transport family. HKT (TC 2.A.38.3) subfamily.

It localises to the membrane. In terms of biological role, seems to be involved in regulation of potassium-sodium homeostasis. Seems to act as a potassium-sodium cotransporter, which mediates increased potassium uptake under external sodium accumulation and contributes to salt-tolerance in cultivar indica Pokkali. The chain is Cation transporter HKT2;2 from Oryza sativa subsp. indica (Rice).